Consider the following 475-residue polypeptide: Ribulose bisphosphate carboxylase large chain (475 aa).

A propeptide spanning residues 1–2 is cleaved from the precursor; that stretch reads MS. Residue Pro3 is modified to N-acetylproline. An N6,N6,N6-trimethyllysine modification is found at Lys14. Residues Asn123 and Thr173 each coordinate substrate. Lys175 serves as the catalytic Proton acceptor. Residue Lys177 coordinates substrate. The Mg(2+) site is built by Lys201, Asp203, and Glu204. Lys201 is modified (N6-carboxylysine). The active-site Proton acceptor is His294. The substrate site is built by Arg295, His327, and Ser379.

Belongs to the RuBisCO large chain family. Type I subfamily. As to quaternary structure, heterohexadecamer of 8 large chains and 8 small chains; disulfide-linked. The disulfide link is formed within the large subunit homodimers. The cofactor is Mg(2+). Post-translationally, the disulfide bond which can form in the large chain dimeric partners within the hexadecamer appears to be associated with oxidative stress and protein turnover.

It localises to the plastid. It is found in the chloroplast. It catalyses the reaction 2 (2R)-3-phosphoglycerate + 2 H(+) = D-ribulose 1,5-bisphosphate + CO2 + H2O. The catalysed reaction is D-ribulose 1,5-bisphosphate + O2 = 2-phosphoglycolate + (2R)-3-phosphoglycerate + 2 H(+). RuBisCO catalyzes two reactions: the carboxylation of D-ribulose 1,5-bisphosphate, the primary event in carbon dioxide fixation, as well as the oxidative fragmentation of the pentose substrate in the photorespiration process. Both reactions occur simultaneously and in competition at the same active site. The sequence is that of Ribulose bisphosphate carboxylase large chain from Carpinus caroliniana (American hornbeam).